A 286-amino-acid polypeptide reads, in one-letter code: Formamidopyrimidine-DNA glycosylase (286 aa).

The active-site Schiff-base intermediate with DNA is Pro-2. Catalysis depends on Glu-3, which acts as the Proton donor. The active-site Proton donor; for beta-elimination activity is Lys-61. DNA-binding residues include His-103, Arg-122, and Arg-164. Residues 250 to 284 (NAYGQTGEPCGRCGTQIVRENFMNRGSHYCPNCQK) form an FPG-type zinc finger. Arg-274 acts as the Proton donor; for delta-elimination activity in catalysis.

Belongs to the FPG family. As to quaternary structure, monomer. Zn(2+) serves as cofactor.

The enzyme catalyses Hydrolysis of DNA containing ring-opened 7-methylguanine residues, releasing 2,6-diamino-4-hydroxy-5-(N-methyl)formamidopyrimidine.. It carries out the reaction 2'-deoxyribonucleotide-(2'-deoxyribose 5'-phosphate)-2'-deoxyribonucleotide-DNA = a 3'-end 2'-deoxyribonucleotide-(2,3-dehydro-2,3-deoxyribose 5'-phosphate)-DNA + a 5'-end 5'-phospho-2'-deoxyribonucleoside-DNA + H(+). In terms of biological role, involved in base excision repair of DNA damaged by oxidation or by mutagenic agents. Acts as a DNA glycosylase that recognizes and removes damaged bases. Has a preference for oxidized purines, such as 7,8-dihydro-8-oxoguanine (8-oxoG). Has AP (apurinic/apyrimidinic) lyase activity and introduces nicks in the DNA strand. Cleaves the DNA backbone by beta-delta elimination to generate a single-strand break at the site of the removed base with both 3'- and 5'-phosphates. This chain is Formamidopyrimidine-DNA glycosylase, found in Corynebacterium glutamicum (strain R).